We begin with the raw amino-acid sequence, 694 residues long: Two-component response regulator ORR25 (694 aa).

The Response regulatory domain maps to 17–132; that stretch reads RVLAVDDSPV…DIQNIWQHVW (116 aa). At Asp68 the chain carries 4-aspartylphosphate. Residues 183 to 242 form the HTH myb-type domain; the sequence is TLKRQRVVWTPELHRDFVIAVHELGVDRAVPRKILRMMKVDYMTRENIASHLQKYRLYLK. The segment at residues 213 to 238 is a DNA-binding region (H-T-H motif); it reads PRKILRMMKVDYMTRENIASHLQKYR. Residues 326–349 form a disordered region; that stretch reads VGHGGSPGNNPVFQPLQNSSNARK. Residues 333–347 are compositionally biased toward polar residues; the sequence is GNNPVFQPLQNSSNA.

It belongs to the ARR family. Type-B subfamily. Post-translationally, two-component system major event consists of a His-to-Asp phosphorelay between a sensor histidine kinase (HK) and a response regulator (RR). In plants, the His-to-Asp phosphorelay involves an additional intermediate named Histidine-containing phosphotransfer protein (HPt). This multistep phosphorelay consists of a His-Asp-His-Asp sequential transfer of a phosphate group between first a His and an Asp of the HK protein, followed by the transfer to a conserved His of the HPt protein and finally the transfer to an Asp in the receiver domain of the RR protein.

It localises to the nucleus. Transcriptional activator that binds specific DNA sequence. Functions as a response regulator involved in His-to-Asp phosphorelay signal transduction system. Phosphorylation of the Asp residue in the receiver domain activates the ability of the protein to promote the transcription of target genes. May directly activate some type-A response regulators in response to cytokinins. This Oryza sativa subsp. japonica (Rice) protein is Two-component response regulator ORR25.